Consider the following 330-residue polypeptide: Thioredoxin domain-containing protein 6 (330 aa).

The 105-residue stretch at 11–115 (QVNISTQELW…QKTILDQLEA (105 aa)) folds into the Thioredoxin domain. The NDK stretch occupies residues 157–303 (ERTCTLAIIK…LFPSLKFSDK (147 aa)). The tract at residues 300 to 330 (FSDKDTEAPQGGEAEATAGPTEALCFPEDVD) is disordered. Low complexity predominate over residues 307 to 322 (APQGGEAEATAGPTEA).

It belongs to the NDK family. Monomer and homodimer. As to expression, detected at very low levels in testis, lung and brain.

The protein localises to the cytoplasm. Its subcellular location is the cytoskeleton. It is found in the cilium axoneme. The protein resides in the dynein axonemal particle. May be a regulator of microtubule physiology. The protein is Thioredoxin domain-containing protein 6 of Homo sapiens (Human).